The primary structure comprises 225 residues: ATP-dependent dethiobiotin synthetase BioD (225 aa).

ATP is bound at residue 12 to 17; that stretch reads EVGKTY. Threonine 16 provides a ligand contact to Mg(2+). Lysine 37 is a catalytic residue. Serine 41 provides a ligand contact to substrate. ATP is bound by residues aspartate 52, 114–117, and 174–175; these read EGAG and NC. Residues aspartate 52 and glutamate 114 each contribute to the Mg(2+) site.

Belongs to the dethiobiotin synthetase family. As to quaternary structure, homodimer. The cofactor is Mg(2+).

It localises to the cytoplasm. It carries out the reaction (7R,8S)-7,8-diammoniononanoate + CO2 + ATP = (4R,5S)-dethiobiotin + ADP + phosphate + 3 H(+). It functions in the pathway cofactor biosynthesis; biotin biosynthesis; biotin from 7,8-diaminononanoate: step 1/2. Functionally, catalyzes a mechanistically unusual reaction, the ATP-dependent insertion of CO2 between the N7 and N8 nitrogen atoms of 7,8-diaminopelargonic acid (DAPA, also called 7,8-diammoniononanoate) to form a ureido ring. This is ATP-dependent dethiobiotin synthetase BioD from Francisella tularensis subsp. novicida (strain U112).